A 477-amino-acid chain; its full sequence is Tripartite motif-containing protein 72 (477 aa).

Positions 14, 17, 29, 31, 34, 37, 53, 56, 86, 89, 97, 100, 105, 108, 114, and 117 each coordinate Zn(2+). The RING-type zinc finger occupies 16-59; that stretch reads CQLCLELFRAPVTPECGHTFCQGCLTGVPKNQDQNGSTPCPTCQ. A B box-type zinc finger spans residues 83 to 124; that stretch reads VPQGHCLEHMDPLSVYCEQDKELICGVCASLGKHKGHNIITA. A coiled-coil region spans residues 135 to 232; it reads LPQQQVILQE…QMEGVLKDVE (98 aa). The region spanning 272 to 476 is the B30.2/SPRY domain; the sequence is DEFKFQVWRK…LKIFYPPAEQ (205 aa).

Belongs to the TRIM/RBCC family. As to quaternary structure, homodimer. Homooligomer; disulfide-linked. Oligomerizes on the phospholipid membrane. Disulfide bond formation at Cys-244 occurs in case of membrane damage that cause the entry of the oxidized milieu of the extracellular space, resulting in homooligomerization.

The protein localises to the cell membrane. The protein resides in the sarcolemma. It is found in the cytoplasmic vesicle membrane. The enzyme catalyses S-ubiquitinyl-[E2 ubiquitin-conjugating enzyme]-L-cysteine + [acceptor protein]-L-lysine = [E2 ubiquitin-conjugating enzyme]-L-cysteine + N(6)-ubiquitinyl-[acceptor protein]-L-lysine.. It functions in the pathway protein modification; protein ubiquitination. With respect to regulation, specifically binds phosphatidylserine. The binding to phospholipids enhances ubiquitination activity. Its function is as follows. Muscle-specific E3 ubiquitin-protein ligase that plays a central role in cell membrane repair by nucleating the assembly of the repair machinery at injury sites. Acts as a sensor of oxidation: upon membrane damage, entry of extracellular oxidative environment results in disulfide bond formation and homooligomerization at the injury site. This oligomerization acts as a nucleation site for recruitment of TRIM72-containing vesicles to the injury site, leading to membrane patch formation. Probably acts upstream of the Ca(2+)-dependent membrane resealing process. Required for transport of DYSF to sites of cell injury during repair patch formation. Regulates membrane budding and exocytosis. May be involved in the regulation of the mobility of KCNB1-containing endocytic vesicles. This is Tripartite motif-containing protein 72 (trim72) from Xenopus laevis (African clawed frog).